The following is a 281-amino-acid chain: Probable endonuclease 4 (281 aa).

Residues H67, H107, E142, D176, H179, H211, D224, H226, and E256 each coordinate Zn(2+).

It belongs to the AP endonuclease 2 family. The cofactor is Zn(2+).

It catalyses the reaction Endonucleolytic cleavage to 5'-phosphooligonucleotide end-products.. Functionally, endonuclease IV plays a role in DNA repair. It cleaves phosphodiester bonds at apurinic or apyrimidinic (AP) sites, generating a 3'-hydroxyl group and a 5'-terminal sugar phosphate. This Alkaliphilus oremlandii (strain OhILAs) (Clostridium oremlandii (strain OhILAs)) protein is Probable endonuclease 4.